The sequence spans 264 residues: MKKMTINDLIKWKQEGRKFATSTAYDASFAQLFESQEMPVLLVGDSLGMVLQGKTDTLPVTVEDIAYHTRSVRAGSPNCLLMADMPFMSYATPEQACENAATLMRAGANMVKIEGGDWLVDTVKMLTERAVPVCAHLGLTPQSVNIFGGYKVQGRDQEKADRMVKDALALQEAGAQIVLLECVPAELAARITQVLDVPVIGIGAGNVTDGQILVMHDMFGISANYMPKFSKNFLAETGDMRKAVAQYMAEVESGAFPDEAHTIA.

Mg(2+)-binding residues include D45 and D84. Residues 45-46, D84, and K112 each bind 3-methyl-2-oxobutanoate; that span reads DS. Residue E114 coordinates Mg(2+). The Proton acceptor role is filled by E181.

Belongs to the PanB family. Homodecamer; pentamer of dimers. Mg(2+) serves as cofactor.

It localises to the cytoplasm. It carries out the reaction 3-methyl-2-oxobutanoate + (6R)-5,10-methylene-5,6,7,8-tetrahydrofolate + H2O = 2-dehydropantoate + (6S)-5,6,7,8-tetrahydrofolate. It functions in the pathway cofactor biosynthesis; (R)-pantothenate biosynthesis; (R)-pantoate from 3-methyl-2-oxobutanoate: step 1/2. Functionally, catalyzes the reversible reaction in which hydroxymethyl group from 5,10-methylenetetrahydrofolate is transferred onto alpha-ketoisovalerate to form ketopantoate. In Vibrio campbellii (strain ATCC BAA-1116), this protein is 3-methyl-2-oxobutanoate hydroxymethyltransferase.